The chain runs to 192 residues: ER membrane protein complex subunit 8/9 homolog (192 aa).

In terms of domain architecture, MPN spans 5–135 (ISITTEALSK…LVSIDKVGSD (131 aa)).

This sequence belongs to the EMC8/EMC9 family.

The sequence is that of ER membrane protein complex subunit 8/9 homolog from Dictyostelium discoideum (Social amoeba).